The chain runs to 506 residues: MTLVVYNTLTRRKEVFQPFGGSESISADEAAGGEKPLVRMYVCGVTVYDLCHLGHARTYVVWDMVRRYLECRGYRVKYVQNFTDVDDKILKRALERGESMQAVAERFIAEYFQDMDRLNIKRADLYPRATRSLRAMFELIQSLELKGFAYRVRDPLAPQGETPAYDVYYAVRKFPDYGQLSGRKLEELEAGASGRVGEEGAGKRDPFDFALWKAAPPSEPGFESPWGWGRPGWHIECSAMVRETLGDHIDIHAGGADLIFPHHENELAQSEPITGKPLAKYWLHNGFVNVNGQKMSKSLGNFTTLRQALALYHPMALRLFLLQTHYRSPIDLTEAAMEAASHGWETLQKGIHCAQQFGQGGSPDSEAMRAFQTAMDDDFGTPGALALAFELAKELIREHNLLTHQGHTHLQPHLLRQKGAALLEILATLGFCWPQPAQGSEKAAANGELAKLPPLEDARIEELVAQRTAARKAKNFAEADRIREQLKALGITLIDQKDGTTRWLRQ.

Zn(2+) is bound at residue cysteine 43. The short motif at 45-55 (VTVYDLCHLGH) is the 'HIGH' region element. Zn(2+) contacts are provided by cysteine 237, histidine 262, and glutamate 266. A 'KMSKS' region motif is present at residues 294 to 298 (KMSKS). Lysine 297 serves as a coordination point for ATP.

This sequence belongs to the class-I aminoacyl-tRNA synthetase family. As to quaternary structure, monomer. It depends on Zn(2+) as a cofactor.

The protein resides in the cytoplasm. It carries out the reaction tRNA(Cys) + L-cysteine + ATP = L-cysteinyl-tRNA(Cys) + AMP + diphosphate. This chain is Cysteine--tRNA ligase, found in Synechococcus sp. (strain JA-3-3Ab) (Cyanobacteria bacterium Yellowstone A-Prime).